The following is a 237-amino-acid chain: UPF0280 protein Mthe_1297 (237 aa).

The protein belongs to the UPF0280 family.

In Methanothrix thermoacetophila (strain DSM 6194 / JCM 14653 / NBRC 101360 / PT) (Methanosaeta thermophila), this protein is UPF0280 protein Mthe_1297.